The chain runs to 125 residues: Cardioactive peptide (125 aa).

An N-terminal signal peptide occupies residues 1 to 22 (MTVSRVCLLLLVALVYLDCCYA). Residues 23–42 (ASIPRNFDPRLSEEIVMAPK) constitute a propeptide that is removed on maturation. Cys-47 and Cys-53 form a disulfide bridge. At Cys-53 the chain carries Cysteine amide. Residues 57-125 (RSQGPPGMPA…RRKQKEAYIQ (69 aa)) constitute a propeptide that is removed on maturation.

As to expression, abdominal perivisceral organ; major neurohemal release site. Expressed in 116 neurons in post-embryonic central nervous system. Nine pairs of cells are observed in the brain, 4.5 pairs in the subesophageal ganglion, three pairs in each thoracic ganglion (T1-T3), three pairs in the first abdominal ganglion (A1), five pairs each in the second to sixth abdominal ganglia (A2-A6) and 7.5 pairs in the terminal ganglion. Expressed in every ganglion in each post-embryonic stage, except in the thoracic ganglia of first- and second-instar larvae. Colocalizes with CAP2b in median neurosecretory cells during the last larval instar through to adults.

It is found in the secreted. Its function is as follows. Cardioregulatory neurohormone that increases heart beat rate during adult wing inflation; has no effect on beat amplitude. The effect of CCAP is both ino- and chronotropic. In Manduca sexta (Tobacco hawkmoth), this protein is Cardioactive peptide.